Consider the following 351-residue polypeptide: uncharacterized protein (351 aa).

Positions Met-1–Ala-27 are cleaved as a signal peptide. The segment at Asn-28–Gly-71 is disordered. Residues Ala-30–Asn-60 are compositionally biased toward basic and acidic residues.

Belongs to the aerolysin family.

This is an uncharacterized protein from Staphylococcus aureus (strain N315).